The chain runs to 427 residues: Serine--tRNA ligase (427 aa).

Residue 231 to 233 (TAE) coordinates L-serine. 262–264 (RSE) contributes to the ATP binding site. An L-serine-binding site is contributed by Glu285. An ATP-binding site is contributed by 349–352 (EISS). Residue Ser385 participates in L-serine binding.

This sequence belongs to the class-II aminoacyl-tRNA synthetase family. Type-1 seryl-tRNA synthetase subfamily. Homodimer. The tRNA molecule binds across the dimer.

It localises to the cytoplasm. It carries out the reaction tRNA(Ser) + L-serine + ATP = L-seryl-tRNA(Ser) + AMP + diphosphate + H(+). The catalysed reaction is tRNA(Sec) + L-serine + ATP = L-seryl-tRNA(Sec) + AMP + diphosphate + H(+). It functions in the pathway aminoacyl-tRNA biosynthesis; selenocysteinyl-tRNA(Sec) biosynthesis; L-seryl-tRNA(Sec) from L-serine and tRNA(Sec): step 1/1. Its function is as follows. Catalyzes the attachment of serine to tRNA(Ser). Is also able to aminoacylate tRNA(Sec) with serine, to form the misacylated tRNA L-seryl-tRNA(Sec), which will be further converted into selenocysteinyl-tRNA(Sec). This chain is Serine--tRNA ligase, found in Sinorhizobium fredii (strain NBRC 101917 / NGR234).